The chain runs to 329 residues: GMP reductase (329 aa).

Cysteine 178 (thioimidate intermediate) is an active-site residue. An NADP(+)-binding site is contributed by 207–230 (IIADGGIRNNGDIAKSIRFGATMC).

Belongs to the IMPDH/GMPR family. GuaC type 2 subfamily.

It catalyses the reaction IMP + NH4(+) + NADP(+) = GMP + NADPH + 2 H(+). Catalyzes the irreversible NADPH-dependent deamination of GMP to IMP. It functions in the conversion of nucleobase, nucleoside and nucleotide derivatives of G to A nucleotides, and in maintaining the intracellular balance of A and G nucleotides. In Lacticaseibacillus casei (strain BL23) (Lactobacillus casei), this protein is GMP reductase.